The primary structure comprises 466 residues: Purple acid phosphatase 25 (466 aa).

Positions 1-21 (MRMNKILLVFVFLSIATVINS) are cleaved as a signal peptide. Asp-164 contributes to the Fe cation binding site. Asn-172 is a glycosylation site (N-linked (GlcNAc...) asparagine). Residues Asp-192 and Tyr-195 each coordinate Fe cation. Asp-192 contributes to the Zn(2+) binding site. Zn(2+) is bound by residues Asn-229 and His-314. Asn-229 lines the substrate pocket. His-324 (proton donor) is an active-site residue. Position 351 (His-351) interacts with Zn(2+). Substrate is bound at residue 351–353 (HVH). Residue His-353 coordinates Fe cation. 2 N-linked (GlcNAc...) asparagine glycosylation sites follow: Asn-367 and Asn-424.

It belongs to the metallophosphoesterase superfamily. Purple acid phosphatase family. Homodimer. Requires Fe cation as cofactor. Zn(2+) is required as a cofactor. In terms of tissue distribution, specifically expressed in flowers.

It is found in the secreted. It carries out the reaction a phosphate monoester + H2O = an alcohol + phosphate. The polypeptide is Purple acid phosphatase 25 (PAP25) (Arabidopsis thaliana (Mouse-ear cress)).